Reading from the N-terminus, the 389-residue chain is Carbamoyl phosphate synthase small chain (389 aa).

A CPSase region spans residues 1 to 197 (MMSSPAKAAK…AAKDASIGDD (197 aa)). Residues Ser51, Gly249, and Gly251 each contribute to the L-glutamine site. A Glutamine amidotransferase type-1 domain is found at 201 to 387 (HVVCMDFGMK…QEQLNEKCGV (187 aa)). The Nucleophile role is filled by Cys276. Residues Leu277, Gln280, Asn318, Gly320, and Phe321 each contribute to the L-glutamine site. Catalysis depends on residues His360 and Glu362.

This sequence belongs to the CarA family. Composed of two chains; the small (or glutamine) chain promotes the hydrolysis of glutamine to ammonia, which is used by the large (or ammonia) chain to synthesize carbamoyl phosphate. Tetramer of heterodimers (alpha,beta)4.

The catalysed reaction is hydrogencarbonate + L-glutamine + 2 ATP + H2O = carbamoyl phosphate + L-glutamate + 2 ADP + phosphate + 2 H(+). It catalyses the reaction L-glutamine + H2O = L-glutamate + NH4(+). It participates in amino-acid biosynthesis; L-arginine biosynthesis; carbamoyl phosphate from bicarbonate: step 1/1. It functions in the pathway pyrimidine metabolism; UMP biosynthesis via de novo pathway; (S)-dihydroorotate from bicarbonate: step 1/3. Functionally, small subunit of the glutamine-dependent carbamoyl phosphate synthetase (CPSase). CPSase catalyzes the formation of carbamoyl phosphate from the ammonia moiety of glutamine, carbonate, and phosphate donated by ATP, constituting the first step of 2 biosynthetic pathways, one leading to arginine and/or urea and the other to pyrimidine nucleotides. The small subunit (glutamine amidotransferase) binds and cleaves glutamine to supply the large subunit with the substrate ammonia. This is Carbamoyl phosphate synthase small chain from Rhodopirellula baltica (strain DSM 10527 / NCIMB 13988 / SH1).